We begin with the raw amino-acid sequence, 651 residues long: MSNESLANLLKEERRFAPPADLAANANVTAEAYEQAKADRLGFWAEQARRLTWAKEPTETLDWSNPPFAKWFKDGTLNVAYNCVDRHVEAGNGDRVAIHFEGESGDSRALTYAQLKDEVSKAANALLELGVQKGDRVAIYMPMIPETAIAMLACARIGAAHSVVFGGFSSDALATRIQDADARVVITADGGYRRGKPSALKPAVDEAVERAGIVEHVLVVRRTGQDVAWDDSRDKWWHETVDGQSAEHTPEAFDAEHPLFILYTSGTTGKPKGILHTSGGYLTQTAYTHWAVFDLKPETDVFWCTADVGWVTGHSYIVYGPLANGATQVMYEGTPDTPHQGRFWEIVQKYGVTILYTAPTAIRTFMKWGDDIPAKFDLSSLRVLGSVGEPINPEAWIWYRKNIGADATPVVDTWWQTETGAMMITPLPGVTHAKPGSAQRPLPGISATVVDDEANEVPNGGGGYLVLTEPWPSMLRTIWGDDQRFIDTYWSRFEGKYFAGDGAKKDDDGDIWLLGRVDDVMLVSGHNISTTEVESALVSHPSVAEAAVVGATDETTGQAIVAFVILRGTTAESEDLVAELRNHVGATLGPIAKPKRILPVSELPKTRSGKIMRRLLRDVAENRQVGDVTTLADSTVMDLIQTKLPAAPSED.

Residues 193 to 196 (RRGK) and threonine 312 each bind CoA. ATP-binding positions include 388 to 390 (GEP), 412 to 417 (DTWWQT), aspartate 501, and arginine 516. Serine 524 is a CoA binding site. Positions 538, 540, and 543 each coordinate Mg(2+). Lysine 610 carries the N6-acetyllysine modification.

It belongs to the ATP-dependent AMP-binding enzyme family. Requires Mg(2+) as cofactor. Acetylated. Deacetylation by the SIR2-homolog deacetylase activates the enzyme.

It carries out the reaction acetate + ATP + CoA = acetyl-CoA + AMP + diphosphate. Catalyzes the conversion of acetate into acetyl-CoA (AcCoA), an essential intermediate at the junction of anabolic and catabolic pathways. AcsA undergoes a two-step reaction. In the first half reaction, AcsA combines acetate with ATP to form acetyl-adenylate (AcAMP) intermediate. In the second half reaction, it can then transfer the acetyl group from AcAMP to the sulfhydryl group of CoA, forming the product AcCoA. The polypeptide is Acetyl-coenzyme A synthetase (Streptomyces coelicolor (strain ATCC BAA-471 / A3(2) / M145)).